Here is a 1070-residue protein sequence, read N- to C-terminus: DNA-directed RNA polymerase subunit beta (1070 aa).

It belongs to the RNA polymerase beta chain family. In plastids the minimal PEP RNA polymerase catalytic core is composed of four subunits: alpha, beta, beta', and beta''. When a (nuclear-encoded) sigma factor is associated with the core the holoenzyme is formed, which can initiate transcription.

The protein resides in the plastid. It is found in the chloroplast. The enzyme catalyses RNA(n) + a ribonucleoside 5'-triphosphate = RNA(n+1) + diphosphate. Functionally, DNA-dependent RNA polymerase catalyzes the transcription of DNA into RNA using the four ribonucleoside triphosphates as substrates. The chain is DNA-directed RNA polymerase subunit beta from Nicotiana tomentosiformis (Tobacco).